The primary structure comprises 439 residues: Gnt-II system L-idonate transporter (439 aa).

The Periplasmic segment spans residues 1 to 11; it reads MPLIIIAAGVA. A helical transmembrane segment spans residues 12–34; the sequence is LLLILMIGFKVNGFIALVLVAAV. The Cytoplasmic portion of the chain corresponds to 35–53; that stretch reads VGFAEGMDAQAVLHSIQNG. A helical transmembrane segment spans residues 54-76; it reads IGSTLGGLAMILGFGAMLGKLIS. The Periplasmic portion of the chain corresponds to 77–96; sequence DTGAAQRIATTLIATFGKKR. The chain crosses the membrane as a helical span at residues 97–114; it reads VQWALVITGLVVGLAMFF. The Cytoplasmic portion of the chain corresponds to 115–118; sequence EVGF. Residues 119-141 form a helical membrane-spanning segment; it reads VLLLPLVFTIVASSGLPLLYVGV. At 142–170 the chain is on the periplasmic side; it reads PMVAALSVTHCFLPPHPGPTAIATIFEAN. Residues 171-193 traverse the membrane as a helical segment; sequence LGTTLLYGFIITIPTVIVAGPLF. The Cytoplasmic segment spans residues 194–218; sequence SKLLTRFEKAPPEGLFNPHLFSEEE. The chain crosses the membrane as a helical span at residues 219-241; that stretch reads MPSFWNSIFAAVIPVILMAIAAV. The Periplasmic segment spans residues 242–253; that stretch reads CEITLPKTNTVR. A helical transmembrane segment spans residues 254-276; that stretch reads LFFEFVGNPAVALFIAIVIAIFT. Residues 277-290 lie on the Cytoplasmic side of the membrane; sequence LGRRNGRTIEQIMD. Residues 291-310 form a helical membrane-spanning segment; that stretch reads IIGDSIGAIAMIVFIIAGGG. The Periplasmic segment spans residues 311–322; that stretch reads AFKQVLVDSGVG. The chain crosses the membrane as a helical span at residues 323-345; the sequence is HYISHLMTGTTLSPLLMCWTVAA. Topologically, residues 346–348 are cytoplasmic; sequence LLR. Residues 349–371 traverse the membrane as a helical segment; the sequence is IALGSATVAAITTAGVVLPIINV. The Periplasmic portion of the chain corresponds to 372–377; that stretch reads THADPA. The chain crosses the membrane as a helical span at residues 378–400; sequence LMVLATGAGSVIASHVNDPGFWL. Residues 401–414 lie on the Cytoplasmic side of the membrane; that stretch reads FKGYFNLTVGETLR. The chain crosses the membrane as a helical span at residues 415–437; sequence TWTVMETLISIMGLLGVLAINAV. Over 438-439 the chain is Periplasmic; the sequence is LH.

It belongs to the GntP permease family.

The protein resides in the cell inner membrane. The enzyme catalyses L-idonate(in) + H(+)(in) = L-idonate(out) + H(+)(out). It carries out the reaction D-gluconate(in) + H(+)(in) = D-gluconate(out) + H(+)(out). The catalysed reaction is 5-dehydro-D-gluconate(in) + H(+)(in) = 5-dehydro-D-gluconate(out) + H(+)(out). The protein operates within carbohydrate acid metabolism; L-idonate degradation. Its function is as follows. Transporter which is probably involved in L-idonate metabolism. Transports L-idonate from the periplasm across the inner membrane. Can also transport D-gluconate and 5-keto-D-gluconate. It has been reported that gluconate uptake probably occurs via a proton-symport mechanism in E.coli. This is Gnt-II system L-idonate transporter from Escherichia coli (strain K12).